A 470-amino-acid chain; its full sequence is A-type ATP synthase subunit B (470 aa).

It belongs to the ATPase alpha/beta chains family. Has multiple subunits with at least A(3), B(3), C, D, E, F, H, I and proteolipid K(x).

The protein resides in the cell membrane. Functionally, component of the A-type ATP synthase that produces ATP from ADP in the presence of a proton gradient across the membrane. The B chain is a regulatory subunit. In Haloarcula marismortui (strain ATCC 43049 / DSM 3752 / JCM 8966 / VKM B-1809) (Halobacterium marismortui), this protein is A-type ATP synthase subunit B.